A 570-amino-acid chain; its full sequence is Sulfite reductase [NADPH] hemoprotein beta-component (570 aa).

[4Fe-4S] cluster is bound by residues C434, C440, C479, and C483. A siroheme-binding site is contributed by C483.

It belongs to the nitrite and sulfite reductase 4Fe-4S domain family. Alpha(8)-beta(8). The alpha component is a flavoprotein, the beta component is a hemoprotein. It depends on siroheme as a cofactor. [4Fe-4S] cluster serves as cofactor.

The catalysed reaction is hydrogen sulfide + 3 NADP(+) + 3 H2O = sulfite + 3 NADPH + 4 H(+). The protein operates within sulfur metabolism; hydrogen sulfide biosynthesis; hydrogen sulfide from sulfite (NADPH route): step 1/1. Component of the sulfite reductase complex that catalyzes the 6-electron reduction of sulfite to sulfide. This is one of several activities required for the biosynthesis of L-cysteine from sulfate. The sequence is that of Sulfite reductase [NADPH] hemoprotein beta-component from Escherichia coli O7:K1 (strain IAI39 / ExPEC).